The chain runs to 272 residues: MLTKRIIPCLDIKEGRVVKGTNFVELRDAGDPVELSKIYNEQGADELVFLDITASFEKRDIIIDVVKRTAEQVFIPLTVGGGIKTVDDFRKILRAGADKISINTSAVKTPELIKEASEIFGTQCVVVAMDVKRNYITNPQNENLKDKNIFETKLGSCWFEVYIYGGREGTGIDAIDWAKKVENLGAGEILLTSMDADGTKDGYDLVLTRAISENTKLPIIASGGCGNSDHVVDAFKDGKADAALMASILHYRECTVNDLKKEVEKNNIPVRF.

Catalysis depends on residues Asp11 and Asp130.

Belongs to the HisA/HisF family. Heterodimer of HisH and HisF.

It localises to the cytoplasm. It carries out the reaction 5-[(5-phospho-1-deoxy-D-ribulos-1-ylimino)methylamino]-1-(5-phospho-beta-D-ribosyl)imidazole-4-carboxamide + L-glutamine = D-erythro-1-(imidazol-4-yl)glycerol 3-phosphate + 5-amino-1-(5-phospho-beta-D-ribosyl)imidazole-4-carboxamide + L-glutamate + H(+). Its pathway is amino-acid biosynthesis; L-histidine biosynthesis; L-histidine from 5-phospho-alpha-D-ribose 1-diphosphate: step 5/9. Functionally, IGPS catalyzes the conversion of PRFAR and glutamine to IGP, AICAR and glutamate. The HisF subunit catalyzes the cyclization activity that produces IGP and AICAR from PRFAR using the ammonia provided by the HisH subunit. This is Imidazole glycerol phosphate synthase subunit HisF from Methanococcus maripaludis (strain C7 / ATCC BAA-1331).